We begin with the raw amino-acid sequence, 143 residues long: FAM161 homolog famh-136 (143 aa).

Belongs to the FAM136 family.

The protein localises to the cytoplasm. May play a role in locomotion and behavior. The protein is FAM161 homolog famh-136 of Caenorhabditis elegans.